Reading from the N-terminus, the 335-residue chain is Nuclear transcription factor Y subunit gamma (335 aa).

Belongs to the NFYC/HAP5 subunit family. As to quaternary structure, heterotrimeric transcription factor composed of three components, NF-YA, NF-YB and NF-YC. NF-YB and NF-YC must interact and dimerize for NF-YA association and DNA binding.

It is found in the nucleus. Its function is as follows. Component of the sequence-specific heterotrimeric transcription factor (NF-Y) which specifically recognizes a 5'-CCAAT-3' box motif found in the promoters of its target genes. NF-Y can function as both an activator and a repressor, depending on its interacting cofactors. The protein is Nuclear transcription factor Y subunit gamma (NFYC) of Pongo abelii (Sumatran orangutan).